A 338-amino-acid chain; its full sequence is NADPH dehydrogenase (338 aa).

Position 22–25 (22–25) interacts with FMN; that stretch reads SPMC. Residue Tyr27 coordinates substrate. The FMN site is built by Ala59 and Gln101. 163-166 is a binding site for substrate; that stretch reads HAAH. FMN is bound by residues Arg214 and 306–307; that span reads GR.

It belongs to the NADH:flavin oxidoreductase/NADH oxidase family. NamA subfamily. As to quaternary structure, homotetramer. FMN serves as cofactor.

The catalysed reaction is A + NADPH + H(+) = AH2 + NADP(+). In terms of biological role, catalyzes the reduction of the double bond of an array of alpha,beta-unsaturated aldehydes and ketones. It also reduces the nitro group of nitroester and nitroaromatic compounds. It could have a role in detoxification processes. The protein is NADPH dehydrogenase of Listeria innocua serovar 6a (strain ATCC BAA-680 / CLIP 11262).